Reading from the N-terminus, the 307-residue chain is Golgi to ER traffic protein 2 (307 aa).

Topologically, residues 1-173 (MSDSTDSPAV…QAYDTYQQKL (173 aa)) are cytoplasmic. Polar residues predominate over residues 41-52 (LSQGSSVKTTGV). Residues 41 to 73 (LSQGSSVKTTGVKSVLDEPQPTATSSAIHDEDP) form a disordered region. A helical transmembrane segment spans residues 174 to 194 (WKSRFLVIRVVVTLFNFFYHY). Residues 195 to 220 (LNVPSFHASNYSYVRDLAQDEFPVRN) lie on the Lumenal side of the membrane. A helical membrane pass occupies residues 221–240 (FFTWFAAFEVIIVLQYYTVF). Over 241-284 (HKLGLFHAANQNSMIMKLMSMGSMVLPQLNTYQPLVARFLGYYE) the chain is Cytoplasmic. The helical transmembrane segment at 285–305 (LFGIIFGDLSLVIVLFGLLSF) threads the bilayer. Over 306–307 (TK) the chain is Lumenal.

It belongs to the GET2 family. Component of the Golgi to ER traffic (GET) complex, which is composed of GET1, GET2 and GET3. Within the complex, GET1 and GET2 form a heterotetramer which is stabilized by phosphatidylinositol binding and which binds to the GET3 homodimer.

It localises to the endoplasmic reticulum membrane. The protein resides in the golgi apparatus membrane. Functionally, required for the post-translational delivery of tail-anchored (TA) proteins to the endoplasmic reticulum. Together with GET1, acts as a membrane receptor for soluble GET3, which recognizes and selectively binds the transmembrane domain of TA proteins in the cytosol. The GET complex cooperates with the HDEL receptor ERD2 to mediate the ATP-dependent retrieval of resident ER proteins that contain a C-terminal H-D-E-L retention signal from the Golgi to the ER. This Candida tropicalis (strain ATCC MYA-3404 / T1) (Yeast) protein is Golgi to ER traffic protein 2.